The following is a 309-amino-acid chain: Homoserine kinase (309 aa).

Residue 91–101 participates in ATP binding; it reads PIGSGLGSSAC.

This sequence belongs to the GHMP kinase family. Homoserine kinase subfamily.

It localises to the cytoplasm. The enzyme catalyses L-homoserine + ATP = O-phospho-L-homoserine + ADP + H(+). Its pathway is amino-acid biosynthesis; L-threonine biosynthesis; L-threonine from L-aspartate: step 4/5. Its function is as follows. Catalyzes the ATP-dependent phosphorylation of L-homoserine to L-homoserine phosphate. This chain is Homoserine kinase, found in Yersinia enterocolitica serotype O:8 / biotype 1B (strain NCTC 13174 / 8081).